The sequence spans 148 residues: UPF0758 protein YeeS (148 aa).

An MPN domain is found at 26–148; sequence AFTSTRAARE…VFSFAEHGLL (123 aa). His97, His99, and Asp110 together coordinate Zn(2+). The JAMM motif signature appears at 97–110; it reads HNHPSGEVTPSKAD.

The protein belongs to the UPF0758 family.

This chain is UPF0758 protein YeeS (yeeS), found in Escherichia coli (strain K12).